The sequence spans 968 residues: RNA polymerase-associated protein RapA (968 aa).

The Helicase ATP-binding domain maps to 164 to 334; it reads EVGQRHAPRV…FARLRLLDPN (171 aa). Residue 177–184 participates in ATP binding; that stretch reads DEVGLGKT. Residues 280–283 carry the DEAH box motif; the sequence is DEAH. In terms of domain architecture, Helicase C-terminal spans 493 to 644; that stretch reads WLVDFLLDLR…TCPTGRALYD (152 aa).

This sequence belongs to the SNF2/RAD54 helicase family. RapA subfamily. As to quaternary structure, interacts with the RNAP. Has a higher affinity for the core RNAP than for the holoenzyme. Its ATPase activity is stimulated by binding to RNAP.

Its function is as follows. Transcription regulator that activates transcription by stimulating RNA polymerase (RNAP) recycling in case of stress conditions such as supercoiled DNA or high salt concentrations. Probably acts by releasing the RNAP, when it is trapped or immobilized on tightly supercoiled DNA. Does not activate transcription on linear DNA. Probably not involved in DNA repair. The chain is RNA polymerase-associated protein RapA from Sodalis glossinidius (strain morsitans).